The sequence spans 423 residues: Acetylornithine aminotransferase, mitochondrial (423 aa).

Residues 1–13 (MFKRYLSSTSSRR) constitute a mitochondrion transit peptide. Lysine 276 carries the N6-(pyridoxal phosphate)lysine modification.

Belongs to the class-III pyridoxal-phosphate-dependent aminotransferase family. Requires pyridoxal 5'-phosphate as cofactor.

It localises to the mitochondrion matrix. It carries out the reaction N(2)-acetyl-L-ornithine + 2-oxoglutarate = N-acetyl-L-glutamate 5-semialdehyde + L-glutamate. The protein operates within amino-acid biosynthesis; L-arginine biosynthesis; N(2)-acetyl-L-ornithine from L-glutamate: step 4/4. In terms of biological role, catalyzes the conversion of N-acetylglutamate-gamma-semialdehyde (NAGSA) to N-acetylornithine in arginine biosynthesis. The sequence is that of Acetylornithine aminotransferase, mitochondrial (ARG8) from Saccharomyces cerevisiae (strain ATCC 204508 / S288c) (Baker's yeast).